The following is a 37-amino-acid chain: Peptide encoded by miPEP164a (37 aa).

In terms of biological role, regulatory peptide encoded by the primary transcript (pri-miR164a) of the microRNA miR164a that enhances the accumulation of its corresponding mature miRNA. Acts probably as a transcriptional activator of its corresponding pri-miRNA. This Arabidopsis thaliana (Mouse-ear cress) protein is Peptide encoded by miPEP164a.